We begin with the raw amino-acid sequence, 365 residues long: Cytosolic 5'-nucleotidase 1A (365 aa).

Over residues 1 to 11 (MEPGQPREARE) the composition is skewed to basic and acidic residues. The disordered stretch occupies residues 1-23 (MEPGQPREAREPGPGAETAAVPR). The active-site Nucleophile is aspartate 208.

This sequence belongs to the 5'-nucleotidase type 3 family. It depends on Mg(2+) as a cofactor.

The protein resides in the cytoplasm. It carries out the reaction a ribonucleoside 5'-phosphate + H2O = a ribonucleoside + phosphate. The catalysed reaction is a 2'-deoxyribonucleoside 5'-phosphate + H2O = a 2'-deoxyribonucleoside + phosphate. The enzyme catalyses IMP + H2O = inosine + phosphate. It catalyses the reaction AMP + H2O = adenosine + phosphate. It carries out the reaction dCMP + H2O = 2'-deoxycytidine + phosphate. With respect to regulation, activated by ADP. Its function is as follows. Catalyzes the hydrolysis of ribonucleotide and deoxyribonucleotide monophosphates, releasing inorganic phosphate and the corresponding nucleoside. AMP is the major substrate but can also hydrolyze dCMP and IMP. The sequence is that of Cytosolic 5'-nucleotidase 1A (Nt5c1a) from Mus musculus (Mouse).